We begin with the raw amino-acid sequence, 140 residues long: Protein YwqH (140 aa).

A coiled-coil region spans residues 6–51 (MLADIKSSLNGKISDVEDKIEKLKKAKKDIDTLQEEAITEIKEIVK).

In Bacillus subtilis (strain 168), this protein is Protein YwqH (ywqH).